The sequence spans 534 residues: MTKYIFVTGGVVSSIGKGIVAASLGRLLKNRGLKVTIQKFDPYINIDPGTMSPYQHGEVYVTDDGAETDLDLGHYERFIDINLNKYSNVTTGKIYSEVLRKERKGEYLGATVQVIPHITDALKEKIKRAASTTDSDVIITEVGGTVGDIESLPFLEALRQMKADVGSENVMYIHTTLLPYLKAAGEMKTKPTQHSVKELRGLGIQPNMLVIRTEEPVEQGIKNKLAQFCDVNSEAVIESRDVEHLYQIPLNLQAQSMDQIVCDHLKLNAPQADMTEWSAMVDKVMNLRKTTKIALVGKYVELPDAYLSVVEALKHSGYANDTAIDLKWVNANDVTVDNAADLLGDADGIIVPGGFGQRGTEGKIQAIRYARENDVPMLGICLGMQLTCVEFARHVLNMEGANSFELEPSTKYPIIDIMRDQIDIEDMGGTLRLGLYPCKLKPGSKAAMAYNNQEVVQRRHRHRYEFNNKFRPEFEAAGFVFSGVSPDNRLVEIVELKEKKFFVAAQYHPELQSRPNRPEELYTAFVTAAIKNSN.

Residues 1–267 (MTKYIFVTGG…DQIVCDHLKL (267 aa)) are amidoligase domain. Serine 13 contributes to the CTP binding site. Serine 13 serves as a coordination point for UTP. 14 to 19 (SIGKGI) lines the ATP pocket. Residue tyrosine 54 coordinates L-glutamine. Position 71 (aspartate 71) interacts with ATP. Positions 71 and 141 each coordinate Mg(2+). CTP contacts are provided by residues 148–150 (DIE), 188–193 (KTKPTQ), and lysine 224. Residues 188-193 (KTKPTQ) and lysine 224 each bind UTP. An ATP-binding site is contributed by 240 to 242 (RDV). In terms of domain architecture, Glutamine amidotransferase type-1 spans 292 to 534 (KIALVGKYVE…FVTAAIKNSN (243 aa)). An L-glutamine-binding site is contributed by glycine 354. Catalysis depends on cysteine 381, which acts as the Nucleophile; for glutamine hydrolysis. Residues 382 to 385 (LGMQ), glutamate 405, and arginine 463 each bind L-glutamine. Residues histidine 508 and glutamate 510 contribute to the active site.

This sequence belongs to the CTP synthase family. In terms of assembly, homotetramer.

The enzyme catalyses UTP + L-glutamine + ATP + H2O = CTP + L-glutamate + ADP + phosphate + 2 H(+). The catalysed reaction is L-glutamine + H2O = L-glutamate + NH4(+). It carries out the reaction UTP + NH4(+) + ATP = CTP + ADP + phosphate + 2 H(+). Its pathway is pyrimidine metabolism; CTP biosynthesis via de novo pathway; CTP from UDP: step 2/2. Allosterically activated by GTP, when glutamine is the substrate; GTP has no effect on the reaction when ammonia is the substrate. The allosteric effector GTP functions by stabilizing the protein conformation that binds the tetrahedral intermediate(s) formed during glutamine hydrolysis. Inhibited by the product CTP, via allosteric rather than competitive inhibition. Functionally, catalyzes the ATP-dependent amination of UTP to CTP with either L-glutamine or ammonia as the source of nitrogen. Regulates intracellular CTP levels through interactions with the four ribonucleotide triphosphates. The sequence is that of CTP synthase from Streptococcus pyogenes serotype M1.